We begin with the raw amino-acid sequence, 166 residues long: Myosin regulatory light chain 2, ventricular/cardiac muscle isoform (166 aa).

Ser-2 is modified (n,N,N-trimethylserine). 3 positions are modified to phosphoserine: Ser-14, Ser-15, and Ser-19. EF-hand domains are found at residues 24-59 (TQIQ…LGRV), 94-129 (DPEE…QAER), and 130-165 (FSKE…GEEK). Ca(2+)-binding residues include Asp-37, Asn-39, Asp-41, and Asp-48. Thr-52 bears the Phosphothreonine mark.

As to quaternary structure, myosin is a hexamer of 2 heavy chains and 4 light chains. Interacts with MYOC. In terms of processing, N-terminus is methylated by METTL11A/NTM1. Post-translationally, phosphorylated by MYLK3 and MYLK2; promotes cardiac muscle contraction and function. Dephosphorylated by PPP1CB complexed to PPP1R12B. The phosphorylated form in adult is expressed as gradients across the heart from endocardium (low phosphorylation) to epicardium (high phosphorylation); regulates cardiac torsion and workload distribution. As to expression, abundantly expressed in both cardiac and slow skeletal muscle (soleus), with no detectable expression in fast skeletal muscle (vastus lateralis) or non-muscle tissue.

The protein resides in the cytoplasm. It localises to the myofibril. Its subcellular location is the sarcomere. The protein localises to the a band. In terms of biological role, contractile protein that plays a role in heart development and function. Following phosphorylation, plays a role in cross-bridge cycling kinetics and cardiac muscle contraction by increasing myosin lever arm stiffness and promoting myosin head diffusion; as a consequence of the increase in maximum contraction force and calcium sensitivity of contraction force. These events altogether slow down myosin kinetics and prolong duty cycle resulting in accumulated myosins being cooperatively recruited to actin binding sites to sustain thin filament activation as a means to fine-tune myofilament calcium sensitivity to force. During cardiogenesis plays an early role in cardiac contractility by promoting cardiac myofibril assembly. This Rattus norvegicus (Rat) protein is Myosin regulatory light chain 2, ventricular/cardiac muscle isoform.